The sequence spans 339 residues: Ribosomal RNA small subunit methyltransferase H (339 aa).

S-adenosyl-L-methionine contacts are provided by residues G36–Y38, D55, F82, D103, and Q110. The segment at G286–P319 is disordered.

It belongs to the methyltransferase superfamily. RsmH family.

The protein resides in the cytoplasm. The catalysed reaction is cytidine(1402) in 16S rRNA + S-adenosyl-L-methionine = N(4)-methylcytidine(1402) in 16S rRNA + S-adenosyl-L-homocysteine + H(+). Specifically methylates the N4 position of cytidine in position 1402 (C1402) of 16S rRNA. The protein is Ribosomal RNA small subunit methyltransferase H of Methylobacterium nodulans (strain LMG 21967 / CNCM I-2342 / ORS 2060).